We begin with the raw amino-acid sequence, 341 residues long: Probable long-chain-alcohol O-fatty-acyltransferase 1 (341 aa).

A run of 8 helical transmembrane segments spans residues 7–27 (NLIE…YISS), 36–56 (LLSI…LSCV), 58–78 (FCAI…LLFA), 120–140 (PMPK…LHVY), 149–169 (FVVL…VLVF), 233–253 (MFAG…LLYF), 261–281 (TWEV…EIAV), and 293–313 (AVSG…LFLA).

Belongs to the wax synthase family.

It localises to the membrane. It catalyses the reaction a long chain fatty alcohol + a fatty acyl-CoA = a wax ester + CoA. Its function is as follows. Catalyzes the final step in the synthesis of long-chain linear esters (waxes). This Arabidopsis thaliana (Mouse-ear cress) protein is Probable long-chain-alcohol O-fatty-acyltransferase 1 (AT1).